The sequence spans 431 residues: Enolase (431 aa).

Q167 contacts (2R)-2-phosphoglycerate. The active-site Proton donor is E209. The Mg(2+) site is built by D246, E287, and D314. Residues K339, R368, S369, and K390 each contribute to the (2R)-2-phosphoglycerate site. K339 functions as the Proton acceptor in the catalytic mechanism.

Belongs to the enolase family. It depends on Mg(2+) as a cofactor.

It localises to the cytoplasm. The protein resides in the secreted. It is found in the cell surface. The enzyme catalyses (2R)-2-phosphoglycerate = phosphoenolpyruvate + H2O. Its pathway is carbohydrate degradation; glycolysis; pyruvate from D-glyceraldehyde 3-phosphate: step 4/5. In terms of biological role, catalyzes the reversible conversion of 2-phosphoglycerate (2-PG) into phosphoenolpyruvate (PEP). It is essential for the degradation of carbohydrates via glycolysis. The chain is Enolase from Prochlorococcus marinus (strain MIT 9303).